A 216-amino-acid chain; its full sequence is Probable RNA 2'-phosphotransferase 1 (216 aa).

The protein belongs to the KptA/TPT1 family.

Functionally, removes the 2'-phosphate from RNA via an intermediate in which the phosphate is ADP-ribosylated by NAD followed by a presumed transesterification to release the RNA and generate ADP-ribose 1''-2''-cyclic phosphate (APPR&gt;P). May function as an ADP-ribosylase. This is Probable RNA 2'-phosphotransferase 1 (kptA1) from Archaeoglobus fulgidus (strain ATCC 49558 / DSM 4304 / JCM 9628 / NBRC 100126 / VC-16).